The following is a 248-amino-acid chain: MEELKALILSIQFMTGIPIPINIDVKEDKIYKIASYFPVVGLLIGGILYIAYLLLKDLFSREIVMTFLVAFSYILTRGMHIDGLADTFDGLFSNKDREKIIEIMKDSRLGTNGVLALVFMVILKILFLSDIRQSLLFSALLVSPVIARLSVVFSIAISKSARGGKGLGGLLLERAGLREFVIALLISTIAGYFVMPLKDLALLYVISLSFTCLISKYISKKIGGMTGDTLGAVNEFVELIAFIYFSIL.

8 helical membrane passes run 3-23, 35-55, 63-83, 109-129, 135-155, 180-199, 200-219, and 228-248; these read ELKA…PINI, SYFP…YLLL, IVMT…HIDG, LGTN…LFLS, LLFS…VFSI, FVIA…PLKD, LALL…KYIS, and DTLG…FSIL.

Belongs to the CobS family. Requires Mg(2+) as cofactor.

It is found in the cell membrane. The enzyme catalyses alpha-ribazole + adenosylcob(III)inamide-GDP = adenosylcob(III)alamin + GMP + H(+). The catalysed reaction is alpha-ribazole 5'-phosphate + adenosylcob(III)inamide-GDP = adenosylcob(III)alamin 5'-phosphate + GMP + H(+). Its pathway is cofactor biosynthesis; adenosylcobalamin biosynthesis; adenosylcobalamin from cob(II)yrinate a,c-diamide: step 7/7. Functionally, joins adenosylcobinamide-GDP and alpha-ribazole to generate adenosylcobalamin (Ado-cobalamin). Also synthesizes adenosylcobalamin 5'-phosphate from adenosylcobinamide-GDP and alpha-ribazole 5'-phosphate. This Caldanaerobacter subterraneus subsp. tengcongensis (strain DSM 15242 / JCM 11007 / NBRC 100824 / MB4) (Thermoanaerobacter tengcongensis) protein is Adenosylcobinamide-GDP ribazoletransferase.